Here is a 650-residue protein sequence, read N- to C-terminus: MNETNNTSLLPVSSLPSGLLPVGFSCTVEKFSVTVKRYLAEGGFSHVYLVQLVFPGKPPFEAVLKRIFATDAMALRAVHEEVRTMKLVSNQKRCVSYYGSEFFRTSKNQFEVLVLLEYCPCGGLIDFLNTRLQVRLSEQEILKIASDVTEAVAVMHYLKPPLIHRDLKIENVLLAAPNSYKLCDFGSACHPIPGAKTAAEAKQLEYDIEKFTTWQYRCPEMINVHKGFGIDEKSDIWALGVLFYKLCYYTTPFEHQGLAAIMNVSYAFPTFPPYSDRLKRLISTLLQQYPWQRPNIYQTFCEICKMRNVPIHIYDIYNGKNVSSCNPSGSEYLQHASKLENSGIHQSKSSVFPQPASAMKPMASPMLPNVNSMPYLSNGDHNNNGNTSSPVSRFSYGQHTSNVPSTQKLPSNFRVTQGAPPSHTYGPPPPVQPKPKISPTTPRLSTLALADDMFSSTAKETVPTNEAVFTGDVKSFDSQESNIIESEPLSASNASGKPRTSVNRLVDRYNHTSSLNKVAAAPAPVPKPVNLKSVENPQNNISAPTPSSLQSSNAPVGLGEVESKSVPPTNMATERGVVGRRASMSIAVNARRVSKPEKEHTNPNAEQGDVIPEKPMSIKERMNMLMTKTDYEKPKVEGYGRYTDVQQTKK.

Residues 33–315 (VTVKRYLAEG…MRNVPIHIYD (283 aa)) form the Protein kinase domain. Disordered regions lie at residues 344–442 (IHQS…PTTP), 517–571 (KVAA…PTNM), and 591–616 (RRVS…EKPM). 2 stretches are compositionally biased toward polar residues: residues 369-415 (NVNS…NFRV) and 533-554 (SVEN…SSNA).

The protein is Protein kinase domain-containing protein ppk38 (ppk38) of Schizosaccharomyces pombe (strain 972 / ATCC 24843) (Fission yeast).